Here is a 3071-residue protein sequence, read N- to C-terminus: Intermembrane lipid transfer protein vps1301 (3071 aa).

The 114-residue stretch at Leu-2–Asp-115 folds into the Chorein N-terminal domain. One can recognise an SHR-BD domain in the interval His-2143–Ala-2415.

It belongs to the VPS13 family.

It localises to the golgi apparatus. Its subcellular location is the trans-Golgi network. Mediates the transfer of lipids between membranes at organelle contact sites. May play a role in mitochondrial lipid homeostasis, Golgi vesicle transport, reticulophagy, actin cytoskeleton organization and formation of the forespore membrane. This Schizosaccharomyces pombe (strain 972 / ATCC 24843) (Fission yeast) protein is Intermembrane lipid transfer protein vps1301.